The chain runs to 838 residues: G-protein coupled receptor-associated sorting protein 2 (838 aa).

Disordered regions lie at residues 1–122, 218–292, 349–368, and 531–552; these read MTGA…GARP, ASNE…SNPF, RFRH…RAQK, and LELS…PSPE. Residues 13 to 31 are compositionally biased toward basic and acidic residues; it reads KPEKKAGEEVIAGPEREND. Positions 220–245 are enriched in polar residues; the sequence is NESGFWSADETSTASSFWTGEETSVR. Positions 255-271 are enriched in basic residues; it reads RSRHRAKHQTNPRSRPR. Phosphoserine is present on residues Ser-282 and Ser-284. Residues 542-552 show a composition bias toward polar residues; sequence SLLQPDQPSPE.

This sequence belongs to the GPRASP family. As to quaternary structure, interacts with cytoplasmic tails of a variety of G-protein coupled receptors such as muscarinic acetylcholine receptor M1/CHRM1 and calcitonin receptor/CALCR. In terms of tissue distribution, expressed in the brain.

In terms of biological role, may play a role in regulation of a variety of G-protein coupled receptors. The protein is G-protein coupled receptor-associated sorting protein 2 (GPRASP2) of Homo sapiens (Human).